Here is a 472-residue protein sequence, read N- to C-terminus: MNFKQAYYEEPIIKDIKSSNTFSLSEQVDESILPENLKRKDLELPEVSEYDVVRHYTRLSQMNYTVDVGIYPLGSCTMKYNPKFADRVSAIDGFRNIHPFQPENTVQGALHVMYDLQEYLKKISDMDAVSLQPMAGADGEFTGILIVKKYFEDKGEDRTEIIIPDSAHGTNPASATMGGFDVVEVPSDDKGMVDLEALRAAVSKKTAAFMITNPNTLGIFEQNIEEIAKIIHNAGALLYYDGANLNAIFGITSPGLMGFDIVHFNLHKSFATPHGGGGPGAGPVAVKSFLKDFLPVPIVDFDGNSYRLNYELKKTIGKVSSFYGSFSILLRAWSYIIRNGDDGLKNVSARAVLNSNYLKKKLEKYYDIPYYPLKKHEFVLSTENTGKRALDIGKYILDNGIHSPTVYFPLIVKEAMMIEPTETVSKADLDNYADVLIEALKLSDEELKSRPKNTAVRRIDEVKAARDLKLKW.

Lys-268 is subject to N6-(pyridoxal phosphate)lysine.

It belongs to the GcvP family. C-terminal subunit subfamily. In terms of assembly, the glycine cleavage system is composed of four proteins: P, T, L and H. In this organism, the P 'protein' is a heterodimer of two subunits. The cofactor is pyridoxal 5'-phosphate.

The enzyme catalyses N(6)-[(R)-lipoyl]-L-lysyl-[glycine-cleavage complex H protein] + glycine + H(+) = N(6)-[(R)-S(8)-aminomethyldihydrolipoyl]-L-lysyl-[glycine-cleavage complex H protein] + CO2. Its function is as follows. The glycine cleavage system catalyzes the degradation of glycine. The P protein binds the alpha-amino group of glycine through its pyridoxal phosphate cofactor; CO(2) is released and the remaining methylamine moiety is then transferred to the lipoamide cofactor of the H protein. The polypeptide is Probable glycine dehydrogenase (decarboxylating) subunit 2 (Thermoplasma volcanium (strain ATCC 51530 / DSM 4299 / JCM 9571 / NBRC 15438 / GSS1)).